Consider the following 599-residue polypeptide: Sulfite reductase [NADPH] flavoprotein alpha-component (599 aa).

Positions isoleucine 63–valine 201 constitute a Flavodoxin-like domain. FMN contacts are provided by residues serine 69–alanine 74, serine 116–glycine 119, and leucine 152–cysteine 161. The FAD-binding FR-type domain occupies glutamate 234–proline 448. FAD contacts are provided by residues threonine 322, histidine 356, arginine 386 to serine 389, threonine 404 to glycine 406, tyrosine 410, and glycine 419 to serine 422. NADP(+) contacts are provided by residues serine 519–arginine 520, lysine 525–glutamine 529, and aspartate 561. Residue tyrosine 599 participates in FAD binding.

Belongs to the NADPH-dependent sulphite reductase flavoprotein subunit CysJ family. It in the N-terminal section; belongs to the flavodoxin family. This sequence in the C-terminal section; belongs to the flavoprotein pyridine nucleotide cytochrome reductase family. As to quaternary structure, alpha(8)-beta(8). The alpha component is a flavoprotein, the beta component is a hemoprotein. FAD serves as cofactor. It depends on FMN as a cofactor.

The catalysed reaction is hydrogen sulfide + 3 NADP(+) + 3 H2O = sulfite + 3 NADPH + 4 H(+). The protein operates within sulfur metabolism; hydrogen sulfide biosynthesis; hydrogen sulfide from sulfite (NADPH route): step 1/1. Component of the sulfite reductase complex that catalyzes the 6-electron reduction of sulfite to sulfide. This is one of several activities required for the biosynthesis of L-cysteine from sulfate. The flavoprotein component catalyzes the electron flow from NADPH -&gt; FAD -&gt; FMN to the hemoprotein component. This Serratia proteamaculans (strain 568) protein is Sulfite reductase [NADPH] flavoprotein alpha-component.